We begin with the raw amino-acid sequence, 555 residues long: Glutamine--tRNA ligase (555 aa).

The short motif at Pro-34–His-44 is the 'HIGH' region element. Residues Glu-35–Asn-37 and His-41–Ser-47 each bind ATP. Residues Asp-67 and Tyr-212 each coordinate L-glutamine. ATP contacts are provided by residues Thr-231, Arg-261 to Leu-262, and Met-269 to Lys-271. Residues Val-268–Arg-272 carry the 'KMSKS' region motif. The interaction with tRNA stretch occupies residues Thr-317–Glu-324.

This sequence belongs to the class-I aminoacyl-tRNA synthetase family. Monomer.

The protein resides in the cytoplasm. The enzyme catalyses tRNA(Gln) + L-glutamine + ATP = L-glutaminyl-tRNA(Gln) + AMP + diphosphate. The polypeptide is Glutamine--tRNA ligase (Citrobacter koseri (strain ATCC BAA-895 / CDC 4225-83 / SGSC4696)).